An 83-amino-acid chain; its full sequence is Putative defensin-like protein 150 (83 aa).

Positions 1 to 25 are cleaved as a signal peptide; that stretch reads MMGKHIQLSFAILIMFTIFVLGAVG. 4 disulfide bridges follow: Cys35–Cys83, Cys44–Cys64, Cys49–Cys77, and Cys53–Cys79.

It belongs to the DEFL family.

It is found in the secreted. The polypeptide is Putative defensin-like protein 150 (LCR32) (Arabidopsis thaliana (Mouse-ear cress)).